Consider the following 154-residue polypeptide: Aspartate carbamoyltransferase regulatory chain (154 aa).

The Zn(2+) site is built by cysteine 109, cysteine 114, cysteine 138, and cysteine 141.

This sequence belongs to the PyrI family. As to quaternary structure, contains catalytic and regulatory chains. Zn(2+) serves as cofactor.

Functionally, involved in allosteric regulation of aspartate carbamoyltransferase. The chain is Aspartate carbamoyltransferase regulatory chain from Aliivibrio fischeri (strain ATCC 700601 / ES114) (Vibrio fischeri).